The sequence spans 183 residues: Inosine triphosphate pyrophosphatase (183 aa).

Residue 8 to 13 (TGNKNK) coordinates ITP. Glu36 provides a ligand contact to Mg(2+). ITP is bound by residues Lys48, 64–65 (DT), Lys81, 140–143 (FGWD), Lys161, and 166–167 (HR).

The protein belongs to the HAM1 NTPase family. As to quaternary structure, homodimer. Mg(2+) is required as a cofactor. Requires Mn(2+) as cofactor.

The protein resides in the cytoplasm. The protein localises to the nucleus. It carries out the reaction ITP + H2O = IMP + diphosphate + H(+). The catalysed reaction is dITP + H2O = dIMP + diphosphate + H(+). It catalyses the reaction XTP + H2O = XMP + diphosphate + H(+). Functionally, pyrophosphatase that hydrolyzes non-canonical purine nucleotides such as inosine triphosphate (ITP), deoxyinosine triphosphate (dITP) or xanthosine 5'-triphosphate (XTP) to their respective monophosphate derivatives. The enzyme does not distinguish between the deoxy- and ribose forms. Probably excludes non-canonical purines from RNA and DNA precursor pools, thus preventing their incorporation into RNA and DNA and avoiding chromosomal lesions. The sequence is that of Inosine triphosphate pyrophosphatase from Emericella nidulans (strain FGSC A4 / ATCC 38163 / CBS 112.46 / NRRL 194 / M139) (Aspergillus nidulans).